Reading from the N-terminus, the 245-residue chain is Probable GTP-binding protein EngB (245 aa).

One can recognise an EngB-type G domain in the interval 46–223 (DVPEIAFVGR…AQHLWDWAHP (178 aa)). GTP-binding positions include 54-61 (GRSNAGKS), 81-85 (GRTQS), 103-106 (DLPG), 173-176 (TKSD), and 202-204 (FSS). Positions 61 and 83 each coordinate Mg(2+). The segment at 219 to 245 (DWAHPPEKPAKKPKAEPAAEAATGDEG) is disordered. Over residues 222–235 (HPPEKPAKKPKAEP) the composition is skewed to basic and acidic residues. Positions 236-245 (AAEAATGDEG) are enriched in low complexity.

It belongs to the TRAFAC class TrmE-Era-EngA-EngB-Septin-like GTPase superfamily. EngB GTPase family. Mg(2+) serves as cofactor.

Functionally, necessary for normal cell division and for the maintenance of normal septation. The sequence is that of Probable GTP-binding protein EngB from Polaromonas sp. (strain JS666 / ATCC BAA-500).